Reading from the N-terminus, the 624-residue chain is Probable potassium transport system protein Kup 2 (624 aa).

Transmembrane regions (helical) follow at residues 14–34 (LSFA…LYAF), 51–71 (ILSL…LVIV), 97–117 (GGWL…DGML), 133–153 (LSPN…FFLF), 163–183 (IGVY…ILGF), 211–231 (SALF…ALFA), 245–265 (WFAV…AFVL), 283–303 (FLPV…QAII), 335–355 (VYLP…VVIF), 364–384 (AYGI…GIIA), 393–413 (FKIL…AGNI), and 416–436 (LLTG…VMYT).

Belongs to the HAK/KUP transporter (TC 2.A.72) family.

Its subcellular location is the cell inner membrane. It catalyses the reaction K(+)(in) + H(+)(in) = K(+)(out) + H(+)(out). Transport of potassium into the cell. Likely operates as a K(+):H(+) symporter. The sequence is that of Probable potassium transport system protein Kup 2 from Legionella pneumophila (strain Lens).